A 91-amino-acid polypeptide reads, in one-letter code: Small ribosomal subunit protein uS15 (91 aa).

This sequence belongs to the universal ribosomal protein uS15 family. As to quaternary structure, part of the 30S ribosomal subunit. Forms a bridge to the 50S subunit in the 70S ribosome, contacting the 23S rRNA.

In terms of biological role, one of the primary rRNA binding proteins, it binds directly to 16S rRNA where it helps nucleate assembly of the platform of the 30S subunit by binding and bridging several RNA helices of the 16S rRNA. Forms an intersubunit bridge (bridge B4) with the 23S rRNA of the 50S subunit in the ribosome. This is Small ribosomal subunit protein uS15 from Rickettsia felis (strain ATCC VR-1525 / URRWXCal2) (Rickettsia azadi).